A 666-amino-acid chain; its full sequence is Probable potassium transport system protein Kup (666 aa).

Helical transmembrane passes span 16–36 (GFII…LYTM), 58–78 (ISLI…LIAL), 100–120 (PWLI…GALT), 141–161 (IYQN…VLFG), 165–185 (FGTG…FSFL), 221–241 (IFIL…YSDL), 253–273 (WPFV…WILA), 292–312 (LTVY…QALI), 343–363 (LYIP…VLYF), 373–393 (YGLA…YYLI), 399–419 (PFLA…FFWA), and 424–444 (FMHG…VMFI).

Belongs to the HAK/KUP transporter (TC 2.A.72) family.

It is found in the cell membrane. The catalysed reaction is K(+)(in) + H(+)(in) = K(+)(out) + H(+)(out). Its function is as follows. Transport of potassium into the cell. Likely operates as a K(+):H(+) symporter. The chain is Probable potassium transport system protein Kup from Streptococcus pyogenes serotype M5 (strain Manfredo).